Here is a 285-residue protein sequence, read N- to C-terminus: Tropomyosin alpha-3 chain (285 aa).

Residues 1–285 (MMEAIKKKMQ…DHALNDMTSI (285 aa)) are a coiled coil. Met-2 bears the N-acetylmethionine mark. Met-2 bears the N-acetylalanine mark. A Phosphothreonine modification is found at Thr-54. 2 positions are modified to phosphoserine: Ser-62 and Ser-88. A Phosphothreonine modification is found at Thr-109. Residues Ser-207 and Ser-216 each carry the phosphoserine modification. N6-acetyllysine is present on Ile-228. The residue at position 253 (Thr-253) is a Phosphothreonine. Residue Tyr-262 is modified to Phosphotyrosine. Ser-272 is modified (phosphoserine). Thr-283 carries the post-translational modification Phosphothreonine. Position 284 is a phosphoserine (Ser-284).

It belongs to the tropomyosin family. In terms of assembly, homodimer. Heterodimer of an alpha (TPM1, TPM3 or TPM4) and a beta (TPM2) chain. Interacts with TMOD1. Interacts with TNNT1.

The protein resides in the cytoplasm. Its subcellular location is the cytoskeleton. Its function is as follows. Binds to actin filaments in muscle and non-muscle cells. Plays a central role, in association with the troponin complex, in the calcium dependent regulation of vertebrate striated muscle contraction. Smooth muscle contraction is regulated by interaction with caldesmon. In non-muscle cells is implicated in stabilizing cytoskeleton actin filaments. The sequence is that of Tropomyosin alpha-3 chain (Tpm3) from Mus musculus (Mouse).